The following is a 221-amino-acid chain: Putative N-acetylmannosamine-6-phosphate 2-epimerase (221 aa).

It belongs to the NanE family.

It catalyses the reaction an N-acyl-D-glucosamine 6-phosphate = an N-acyl-D-mannosamine 6-phosphate. The protein operates within amino-sugar metabolism; N-acetylneuraminate degradation; D-fructose 6-phosphate from N-acetylneuraminate: step 3/5. Converts N-acetylmannosamine-6-phosphate (ManNAc-6-P) to N-acetylglucosamine-6-phosphate (GlcNAc-6-P). This is Putative N-acetylmannosamine-6-phosphate 2-epimerase from Clostridium perfringens (strain ATCC 13124 / DSM 756 / JCM 1290 / NCIMB 6125 / NCTC 8237 / Type A).